The chain runs to 162 residues: Shikimate kinase (162 aa).

ATP is bound at residue 11 to 16; it reads GSGKSS. Serine 15 is a binding site for Mg(2+). 3 residues coordinate substrate: aspartate 33, arginine 57, and glycine 80. Arginine 116 contributes to the ATP binding site. Arginine 132 is a binding site for substrate.

It belongs to the shikimate kinase family. As to quaternary structure, monomer. Requires Mg(2+) as cofactor.

The protein resides in the cytoplasm. The enzyme catalyses shikimate + ATP = 3-phosphoshikimate + ADP + H(+). The protein operates within metabolic intermediate biosynthesis; chorismate biosynthesis; chorismate from D-erythrose 4-phosphate and phosphoenolpyruvate: step 5/7. Its function is as follows. Catalyzes the specific phosphorylation of the 3-hydroxyl group of shikimic acid using ATP as a cosubstrate. The polypeptide is Shikimate kinase (Helicobacter pylori (strain P12)).